We begin with the raw amino-acid sequence, 410 residues long: Metacaspase-1B (410 aa).

The segment at 1–106 is disordered; that stretch reads MYHRNSAPPP…SFGKGAPSNY (106 aa). Pro residues-rich tracts occupy residues 7-23 and 32-52; these read APPP…PQSQ and PPYP…PPPT. Catalysis depends on residues His-201 and Cys-257.

The protein belongs to the peptidase C14B family.

Involved in cell death (apoptosis). In Aspergillus clavatus (strain ATCC 1007 / CBS 513.65 / DSM 816 / NCTC 3887 / NRRL 1 / QM 1276 / 107), this protein is Metacaspase-1B (casB).